We begin with the raw amino-acid sequence, 37 residues long: Large ribosomal subunit protein bL36 (37 aa).

It belongs to the bacterial ribosomal protein bL36 family.

This Dechloromonas aromatica (strain RCB) protein is Large ribosomal subunit protein bL36.